Consider the following 448-residue polypeptide: Phosphoglucosamine mutase (448 aa).

The Phosphoserine intermediate role is filled by Ser-104. Positions 104, 243, 245, and 247 each coordinate Mg(2+). At Ser-104 the chain carries Phosphoserine.

The protein belongs to the phosphohexose mutase family. Mg(2+) serves as cofactor. In terms of processing, activated by phosphorylation.

It carries out the reaction alpha-D-glucosamine 1-phosphate = D-glucosamine 6-phosphate. Catalyzes the conversion of glucosamine-6-phosphate to glucosamine-1-phosphate. This is Phosphoglucosamine mutase from Xylella fastidiosa (strain 9a5c).